We begin with the raw amino-acid sequence, 833 residues long: MNLLYRKTKLEWRQHKEEEAKRSSSKEAAPTGPVGPGAVPGPGVRVRDIASLRRSLRMGFMTMPASQEHTPHPCRSTMAPRSLSCHSVGSMDSVGGGPGGGLTEDSSTRRPPAKPRRHPSTKLSMAGPGAETPPSKKAGSQKPAPECRESSRKVPPQKPRRSPNTQLSVSFDESCAPAPSPRGANLPLQRLSRASRITGDLDAGAQEEEPVYIEMVGDVFRGGGRSGGGLAGPPLGSGGPTPPAAADSDSEDSEAIYEEMKYPLPEEAGDGRANGPPPLTAPSPPQQTHILQPHPHPHRRPASALPSRRDGTPTKTTPCEIPPPFPNLLQHRPPLLAFPQAKSASRAPGDGVSRLPVLCHSKEPAGSTPAPQVPARERETPPLPPPPPAANLLLLGPSGRARSHSTPLPPQGSGQTRGERELPNSHSMICPKAAGVPAAHPAPAALLPGPPKDKAVSYTMVYSAVKVTTHSVLPAGPPLGVGEPKTEEISVLHGMLCASSRPPVPGKSSPHSGAMGSAAGVLHHRSCLASPHSLPDPTGGSLTPLWTYPATAAGLKRPPAYDSLKAGGVLNKGCGMGAPSPMVKIQLQEQGTDGGAFASISCAHVIASAGTPEEEEEMGAAFGAGWALQRKVLYGGRKAKEVDTEEDGARAWNGSTEGPGKVEHEDRGPVPSGIPVRSQGAEGLLARIHHDRGGSRTALPVPCQTFPACHRNGDFTGGYRLGRSASTSGVRQAALHTPRPCSQPRDALSQTHPVLPLPLPPQPARERDGKLLEVIERKRCVCKEIKARHRPDRGLCKQESMPILPSWRRVPEPRKSGTPPCRRQHTVLWDTAI.

5 disordered regions span residues 1–45, 64–191, 219–423, 645–674, and 736–765; these read MNLL…PGVR, PASQ…LQRL, VFRG…RELP, EEDG…PSGI, and HTPR…QPAR. A compositionally biased stretch (basic and acidic residues) spans 8–25; it reads TKLEWRQHKEEEAKRSSS. An involved in CYFIP1- and NCKAP1-binding region spans residues 76-181; it reads STMAPRSLSC…DESCAPAPSP (106 aa). The span at 111-120 shows a compositional bias: basic residues; that stretch reads PPAKPRRHPS. Residues 162 to 171 show a composition bias toward polar residues; it reads SPNTQLSVSF. The span at 220–239 shows a compositional bias: gly residues; that stretch reads FRGGGRSGGGLAGPPLGSGG. Positions 248-257 are enriched in acidic residues; the sequence is SDSEDSEAIY. A compositionally biased stretch (pro residues) spans 275–285; sequence GPPPLTAPSPP.

Belongs to the NYAP family. As to quaternary structure, interacts with ACOT9, ARHGAP26 and PIK3R2. Interacts with components of the WAVE1 complex, CYFIP1 and NCKAP1; this interaction mediates PI3K-WAVE1 association and actin cytoskeleton remodeling. Post-translationally, phosphorylated on tyrosine residues by FYN upon stimulation with CNTN5. Phosphorylation begins at 14 dpc, reaches a peak during perinatal days in brain, then gradually decreases. Expressed predominantly in brain where it is present in the neurons, but not in astrocytes or oligodendrites.

Functionally, activates PI3K and concomitantly recruits the WAVE1 complex to the close vicinity of PI3K and regulates neuronal morphogenesis. This is Neuronal tyrosine-phosphorylated phosphoinositide-3-kinase adapter 1 (Nyap1) from Mus musculus (Mouse).